A 547-amino-acid polypeptide reads, in one-letter code: ATP-dependent RNA helicase ROK1 (547 aa).

Positions 111 to 139 (DLITRFNLHPYLLANLKKNKYTDPTPIQC) match the Q motif motif. One can recognise a Helicase ATP-binding domain in the interval 142-324 (IPTMLNGRDL…NSIMSTDPLR (183 aa)). 155-162 (APTGSGKT) lines the ATP pocket. Positions 272 to 275 (DEAD) match the DEAD box motif. The region spanning 336-498 (TVEQKLVYAG…EVPDWLNNLA (163 aa)) is the Helicase C-terminal domain. The interval 511-547 (RPIKRKKISTQHALANNKKKRAKQQMKGLKKMKKDDE) is disordered. Over residues 527–547 (NKKKRAKQQMKGLKKMKKDDE) the composition is skewed to basic residues.

The protein belongs to the DEAD box helicase family. DDX52/ROK1 subfamily. Interacts with the U3 snoRNA and is associated with the 90S and 40S pre-ribosomes.

The protein resides in the nucleus. It localises to the nucleolus. The catalysed reaction is ATP + H2O = ADP + phosphate + H(+). In terms of biological role, ATP-dependent RNA helicase involved in 40S ribosomal subunit biogenesis. Required for the processing and cleavage of 35S pre-rRNA at sites A0, A1, and A2, leading to mature 18S rRNA. The chain is ATP-dependent RNA helicase ROK1 (ROK1) from Yarrowia lipolytica (strain CLIB 122 / E 150) (Yeast).